Here is a 291-residue protein sequence, read N- to C-terminus: Lipoyl synthase (291 aa).

[4Fe-4S] cluster is bound by residues Cys36, Cys41, Cys47, Cys62, Cys66, Cys69, and Ser275. In terms of domain architecture, Radical SAM core spans Phe48–Lys264.

This sequence belongs to the radical SAM superfamily. Lipoyl synthase family. It depends on [4Fe-4S] cluster as a cofactor.

The protein localises to the cytoplasm. It catalyses the reaction [[Fe-S] cluster scaffold protein carrying a second [4Fe-4S](2+) cluster] + N(6)-octanoyl-L-lysyl-[protein] + 2 oxidized [2Fe-2S]-[ferredoxin] + 2 S-adenosyl-L-methionine + 4 H(+) = [[Fe-S] cluster scaffold protein] + N(6)-[(R)-dihydrolipoyl]-L-lysyl-[protein] + 4 Fe(3+) + 2 hydrogen sulfide + 2 5'-deoxyadenosine + 2 L-methionine + 2 reduced [2Fe-2S]-[ferredoxin]. It functions in the pathway protein modification; protein lipoylation via endogenous pathway; protein N(6)-(lipoyl)lysine from octanoyl-[acyl-carrier-protein]: step 2/2. Catalyzes the radical-mediated insertion of two sulfur atoms into the C-6 and C-8 positions of the octanoyl moiety bound to the lipoyl domains of lipoate-dependent enzymes, thereby converting the octanoylated domains into lipoylated derivatives. The chain is Lipoyl synthase from Caldicellulosiruptor bescii (strain ATCC BAA-1888 / DSM 6725 / KCTC 15123 / Z-1320) (Anaerocellum thermophilum).